Consider the following 234-residue polypeptide: Carboxymethylenebutenolidase 1 (234 aa).

Active-site residues include Cys123, Asp171, and His201.

Belongs to the dienelactone hydrolase family. Monomer.

The catalysed reaction is 2-(5-oxo-2,5-dihydrofuran-2-ylidene)acetate + H2O = 4-oxohex-2-enedioate + H(+). It functions in the pathway aromatic compound metabolism; 3-chlorocatechol degradation. Functionally, ring cleavage of cyclic ester dienelactone to produce maleylacetate. The polypeptide is Carboxymethylenebutenolidase 1 (tfdEI) (Cupriavidus pinatubonensis (strain JMP 134 / LMG 1197) (Cupriavidus necator (strain JMP 134))).